The following is a 265-amino-acid chain: Ribosomal RNA small subunit methyltransferase A (265 aa).

S-adenosyl-L-methionine is bound by residues His17, Leu19, Gly44, Glu65, Asp90, and Asn112.

The protein belongs to the class I-like SAM-binding methyltransferase superfamily. rRNA adenine N(6)-methyltransferase family. RsmA subfamily.

Its subcellular location is the cytoplasm. The enzyme catalyses adenosine(1518)/adenosine(1519) in 16S rRNA + 4 S-adenosyl-L-methionine = N(6)-dimethyladenosine(1518)/N(6)-dimethyladenosine(1519) in 16S rRNA + 4 S-adenosyl-L-homocysteine + 4 H(+). In terms of biological role, specifically dimethylates two adjacent adenosines (A1518 and A1519) in the loop of a conserved hairpin near the 3'-end of 16S rRNA in the 30S particle. May play a critical role in biogenesis of 30S subunits. The protein is Ribosomal RNA small subunit methyltransferase A of Xylella fastidiosa (strain Temecula1 / ATCC 700964).